Here is a 222-residue protein sequence, read N- to C-terminus: Voltage-dependent calcium channel gamma-1 subunit (222 aa).

Residues 1 to 10 (MSPTEAPKVR) are Cytoplasmic-facing. Residues 11 to 29 (VTLFCILVGIVLAMTAVVS) form a helical membrane-spanning segment. At 30 to 108 (DHWAVLSPHM…TQKEYSISAA (79 aa)) the chain is on the extracellular side. N-linked (GlcNAc...) asparagine glycans are attached at residues Asn43 and Asn79. Cys57 and Cys80 are joined by a disulfide. A helical membrane pass occupies residues 109–129 (AISVFSLGFLIMGTICALMAF). At 130–134 (RKKRD) the chain is on the cytoplasmic side. The helical transmembrane segment at 135–155 (YLLRPASMFYVFAGLCLFVSL) threads the bilayer. At 156–179 (EVMRQSVKRMIDSEDTVWIEYYYS) the chain is on the extracellular side. A helical membrane pass occupies residues 180–204 (WSFACACAAFVLLFLGGISLLLFSL). Residues 205-222 (PRMPQNPWESCMDAEPEH) lie on the Cytoplasmic side of the membrane.

This sequence belongs to the PMP-22/EMP/MP20 family. CACNG subfamily. Component of a calcium channel complex consisting of a pore-forming alpha subunit (CACNA1S) and the ancillary subunits CACNB1 or CACNB2, CACNG1 and CACNA2D1. The channel complex contains alpha, beta, gamma and delta subunits in a 1:1:1:1 ratio, i.e. it contains either CACNB1 or CACNB2. Post-translationally, N-glycosylated. In terms of tissue distribution, skeletal muscle (at protein level).

Its subcellular location is the cell membrane. The protein resides in the sarcolemma. Regulatory subunit of the voltage-gated calcium channel that gives rise to L-type calcium currents in skeletal muscle. Regulates channel inactivation kinetics. This Oryctolagus cuniculus (Rabbit) protein is Voltage-dependent calcium channel gamma-1 subunit (CACNG1).